The sequence spans 231 residues: Flagellar L-ring protein 2 (231 aa).

The first 15 residues, 1 to 15 (MKNLILILPLLMLTG), serve as a signal peptide directing secretion. The N-palmitoyl cysteine moiety is linked to residue Cys-16. The S-diacylglycerol cysteine moiety is linked to residue Cys-16. Residues 30 to 54 (SPVGSGLRTQADPIPVTPRMRTPVS) form a disordered region.

Belongs to the FlgH family. The basal body constitutes a major portion of the flagellar organelle and consists of four rings (L,P,S, and M) mounted on a central rod.

It is found in the cell outer membrane. It localises to the bacterial flagellum basal body. In terms of biological role, assembles around the rod to form the L-ring and probably protects the motor/basal body from shearing forces during rotation. This is Flagellar L-ring protein 2 from Bradyrhizobium diazoefficiens (strain JCM 10833 / BCRC 13528 / IAM 13628 / NBRC 14792 / USDA 110).